The following is a 587-amino-acid chain: Polyphenol oxidase E, chloroplastic (587 aa).

Residues 1 to 87 (MSSSSSITTT…AANLAPLATA (87 aa)) constitute a chloroplast transit peptide. Disulfide bonds link C98/C114 and C113/C180. Residues H179, H197, H206, H328, H332, and H363 each contribute to the Cu cation site. The 2'-(S-cysteinyl)-histidine (Cys-His) cross-link spans 183 to 197 (CNGAYKVGGKELQVH).

Belongs to the tyrosinase family. Cu(2+) is required as a cofactor.

It is found in the plastid. The protein resides in the chloroplast thylakoid lumen. It carries out the reaction 2 catechol + O2 = 2 1,2-benzoquinone + 2 H2O. Functionally, catalyzes the oxidation of mono- and o-diphenols to o-diquinones. This Solanum lycopersicum (Tomato) protein is Polyphenol oxidase E, chloroplastic.